Here is a 473-residue protein sequence, read N- to C-terminus: ATP synthase subunit beta (473 aa).

153-160 (GGAGVGKT) contributes to the ATP binding site.

Belongs to the ATPase alpha/beta chains family. F-type ATPases have 2 components, CF(1) - the catalytic core - and CF(0) - the membrane proton channel. CF(1) has five subunits: alpha(3), beta(3), gamma(1), delta(1), epsilon(1). CF(0) has three main subunits: a(1), b(2) and c(9-12). The alpha and beta chains form an alternating ring which encloses part of the gamma chain. CF(1) is attached to CF(0) by a central stalk formed by the gamma and epsilon chains, while a peripheral stalk is formed by the delta and b chains.

It localises to the cell inner membrane. It catalyses the reaction ATP + H2O + 4 H(+)(in) = ADP + phosphate + 5 H(+)(out). In terms of biological role, produces ATP from ADP in the presence of a proton gradient across the membrane. The catalytic sites are hosted primarily by the beta subunits. The protein is ATP synthase subunit beta of Rickettsia conorii (strain ATCC VR-613 / Malish 7).